The primary structure comprises 486 residues: Vanillin dehydrogenase (486 aa).

NAD(+) contacts are provided by residues 210–211, 230–231, and 252–254; these read GP, GS, and ELG. Residue Glu252 is the Proton acceptor of the active site. Residue Cys286 is the Nucleophile of the active site. 380–382 contacts NAD(+); sequence EVF.

The protein belongs to the aldehyde dehydrogenase family.

It carries out the reaction vanillin + NAD(+) + H2O = vanillate + NADH + 2 H(+). Functionally, catalyzes NAD(+)-dependent oxidation of vanillin to vanillate. Also oxidizes other aromatic aldehydes including benzaldehyde, coniferyl aldehyde and cinnamaldehyde, but has a preference for vanillin. Not active with NADP(+). Involved in the degradation pathway of lignin-derived aromatic compounds of plant cell walls. Catalyzes the conversion of vanillin to vanillate due to toxicity of vanillin to the cells. This is Vanillin dehydrogenase from Amycolatopsis sp. (strain ATCC 39116 / 75iv2).